Here is a 91-residue protein sequence, read N- to C-terminus: Essential MCU regulator, mitochondrial (91 aa).

A helical transmembrane segment spans residues 45–65 (VIPFGLLGVVLTVIPGLLIGA).

It belongs to the SMDT1/EMRE family.

The protein resides in the mitochondrion inner membrane. Its function is as follows. Essential regulatory subunit of the mitochondrial calcium uniporter (mcu) channel, a protein that mediates calcium uptake into mitochondria. The protein is Essential MCU regulator, mitochondrial of Aedes aegypti (Yellowfever mosquito).